A 146-amino-acid chain; its full sequence is Small ribosomal subunit protein bS16 (146 aa).

A compositionally biased stretch (basic and acidic residues) spans 84-102; that stretch reads SHLEAQKAAVERLGRRKDY. The tract at residues 84-146 is disordered; that stretch reads SHLEAQKAAV…DAPAAEATTE (63 aa). Residues 110 to 119 are compositionally biased toward low complexity; sequence APKAAPVAEA. Over residues 120 to 130 the composition is skewed to acidic residues; the sequence is PAEEAPAEEPA. Residues 131-146 are compositionally biased toward low complexity; sequence AEASTDDAPAAEATTE.

Belongs to the bacterial ribosomal protein bS16 family.

This chain is Small ribosomal subunit protein bS16, found in Rhodopirellula baltica (strain DSM 10527 / NCIMB 13988 / SH1).